Here is a 196-residue protein sequence, read N- to C-terminus: Guanylate kinase (196 aa).

The 185-residue stretch at 7-191 folds into the Guanylate kinase-like domain; that stretch reads RNIVLLVGPS…AAEEIEKIIL (185 aa). An ATP-binding site is contributed by 14 to 21; the sequence is GPSGVGKG.

Belongs to the guanylate kinase family.

Its subcellular location is the cytoplasm. It catalyses the reaction GMP + ATP = GDP + ADP. Its function is as follows. Essential for recycling GMP and indirectly, cGMP. In Mycoplasmopsis pulmonis (strain UAB CTIP) (Mycoplasma pulmonis), this protein is Guanylate kinase.